The sequence spans 299 residues: MKKWTIAASLSIGVLALSACNSDDEIVAETEAGNITKEEFYEELKDVNGESTLQQLVTVKVLEDNYEVTDEELEEEISTMKEGFPSEEDFNTTVEQQFGGEEQLREIMYVSMLQEKAAAEDVEITEEDLQELYERKNTEIQAQHILLENEEDVAEVQQKIEDGEDFGELAQEYSTDTGSAENGGDLGYFSAGSMVPEFEEAAFSLEAGEISDPVQSTHGTHIIKVNDVREKEESIGEFEDVKKELEREILLNRVDQTQIQEKINKLIQDAGVQINVEGMEDLFEAEETEENTTEEDAQG.

The N-terminal stretch at 1–19 (MKKWTIAASLSIGVLALSA) is a signal peptide. Cysteine 20 is lipidated: N-palmitoyl cysteine. Cysteine 20 carries S-diacylglycerol cysteine lipidation. One can recognise a PpiC domain in the interval 137 to 227 (NTEIQAQHIL…HGTHIIKVND (91 aa)).

This sequence belongs to the PrsA family.

The protein localises to the cell membrane. The enzyme catalyses [protein]-peptidylproline (omega=180) = [protein]-peptidylproline (omega=0). Plays a major role in protein secretion by helping the post-translocational extracellular folding of several secreted proteins. The sequence is that of Foldase protein PrsA from Oceanobacillus iheyensis (strain DSM 14371 / CIP 107618 / JCM 11309 / KCTC 3954 / HTE831).